The primary structure comprises 157 residues: Protein Smg (157 aa).

This sequence belongs to the Smg family.

The chain is Protein Smg from Shigella boydii serotype 4 (strain Sb227).